A 70-amino-acid chain; its full sequence is Conotoxin TxMMSK-02 (70 aa).

Positions 1–20 (MMSKLGALLTICLLLFSLTA) are cleaved as a signal peptide. Positions 21–53 (VPLDGDQHADQPAQRLQDRIPTEDHPLFDPNKR) are excised as a propeptide. Intrachain disulfides connect cysteine 54–cysteine 68, cysteine 55–cysteine 64, and cysteine 60–cysteine 67. Proline 66 carries the post-translational modification 4-hydroxyproline. A Tyrosine amide modification is found at tyrosine 69.

It belongs to the conotoxin M superfamily. As to expression, expressed by the venom duct.

Its subcellular location is the secreted. This Conus textile (Cloth-of-gold cone) protein is Conotoxin TxMMSK-02.